Here is a 76-residue protein sequence, read N- to C-terminus: Defensin-like protein 5 (76 aa).

Residues 1 to 29 (MKVSPRLNSALLLLFMILATVMGLVTVEA) form the signal peptide. 4 disulfide bridges follow: Cys32–Cys76, Cys43–Cys63, Cys49–Cys70, and Cys53–Cys72.

This sequence belongs to the DEFL family.

It localises to the secreted. Confers broad-spectrum resistance to pathogens. The chain is Defensin-like protein 5 (PDF2.4) from Arabidopsis thaliana (Mouse-ear cress).